A 189-amino-acid polypeptide reads, in one-letter code: Low affinity inorganic phosphate transporter 2 (189 aa).

Residues 1–55 (TARYTALVAKDAKRAAADMGKVLHVEIDPEDAKVERMAKDESNQFGLFSWEFVRR) lie on the Cytoplasmic side of the membrane. Residues 56–76 (HGLHLFGTCSTWFLLDIAFYS) traverse the membrane as a helical segment. The Extracellular segment spans residues 77-111 (QNLFQKDVFTAIGWIPPAKTMNAVQEVYKIARAQT). A helical transmembrane segment spans residues 112-132 (LIALCSTVPGYWFTVAFIDII). Over 133 to 134 (GR) the chain is Cytoplasmic. Residues 135–155 (FAIQLMGFFFMTVFMFAIAIP) traverse the membrane as a helical segment. At 156–165 (YHHWTLQENR) the chain is on the extracellular side. The helical transmembrane segment at 166 to 186 (IGFVIMYSLTFFFANFGPNAT) threads the bilayer. The Cytoplasmic portion of the chain corresponds to 187–189 (TFV).

Belongs to the major facilitator superfamily. Phosphate:H(+) symporter (TC 2.A.1.9) family.

The protein resides in the cell membrane. The catalysed reaction is phosphate(in) + H(+)(in) = phosphate(out) + H(+)(out). Functionally, low-affinity transporter for external inorganic phosphate (Pi). This Petunia hybrida (Petunia) protein is Low affinity inorganic phosphate transporter 2.